We begin with the raw amino-acid sequence, 188 residues long: GTP cyclohydrolase 1 (188 aa).

Residues Cys76, His79, and Cys148 each contribute to the Zn(2+) site.

It belongs to the GTP cyclohydrolase I family. As to quaternary structure, homomer.

It carries out the reaction GTP + H2O = 7,8-dihydroneopterin 3'-triphosphate + formate + H(+). It participates in cofactor biosynthesis; 7,8-dihydroneopterin triphosphate biosynthesis; 7,8-dihydroneopterin triphosphate from GTP: step 1/1. This Thermoanaerobacter pseudethanolicus (strain ATCC 33223 / 39E) (Clostridium thermohydrosulfuricum) protein is GTP cyclohydrolase 1.